Consider the following 229-residue polypeptide: Protein ras-2 (229 aa).

15-22 provides a ligand contact to GTP; that stretch reads GDGGVGKT. Residues 37-45 carry the Effector region motif; it reads YDPTIEDSY. Position 62-66 (62-66) interacts with GTP; sequence DTAGQ. A disordered region spans residues 109–132; that stretch reads KESTSSPSAYPGSSPLAATNPSAP. Residues 111–126 are compositionally biased toward low complexity; sequence STSSPSAYPGSSPLAA. 140–143 is a GTP binding site; that stretch reads NKSD. Residues 188 to 229 form a disordered region; the sequence is LRKQRQQGQSTPRALPPSGNSKSEKYSGTEKPKRPRGKCLII. Residues 209–219 show a composition bias toward basic and acidic residues; the sequence is KSEKYSGTEKP. Over residues 220–229 the composition is skewed to basic residues; sequence KRPRGKCLII. Cys226 is subject to Cysteine methyl ester. A lipid anchor (S-farnesyl cysteine) is attached at Cys226. The propeptide at 227–229 is removed in mature form; the sequence is LII.

It belongs to the small GTPase superfamily. Ras family.

Its subcellular location is the cell membrane. It catalyses the reaction GTP + H2O = GDP + phosphate + H(+). Its function is as follows. Ras proteins bind GDP/GTP and possess intrinsic GTPase activity. The polypeptide is Protein ras-2 (ras-2) (Neurospora crassa (strain ATCC 24698 / 74-OR23-1A / CBS 708.71 / DSM 1257 / FGSC 987)).